The primary structure comprises 549 residues: Ceramide kinase 1 (549 aa).

One can recognise a DAGKc domain in the interval 162 to 316 (NRPKNIIIFI…VDVCTVHQHQ (155 aa)). ATP contacts are provided by residues 172-174 (NPF) and 205-209 (TERAN). 233-236 (GGDG) is a binding site for substrate. Residue D235 is the Proton donor/acceptor of the active site. Residues E240, 277-279 (GSA), R342, R348, and 500-502 (DGE) each bind ATP.

The enzyme catalyses an N-acylsphing-4-enine + ATP = an N-acylsphing-4-enine 1-phosphate + ADP + H(+). It carries out the reaction an N-acyl-15-methylhexadecasphing-4-enine + ATP = an N-acyl-15-methylhexadecasphing-4-enine-1-phosphate + ADP + H(+). The protein operates within lipid metabolism; sphingolipid metabolism. In terms of biological role, catalyzes the phosphorylation of ceramide to form ceramide 1-phosphate. C.elegans contain specific sphingoid bases, which are unique or different in structure compared to the sphingoid bases found in other animals. Two examples of these distinctive compounds are: 15-methylhexadecasphinganine and 15-methylhexadecasphing-4-enine. The protein is Ceramide kinase 1 of Caenorhabditis elegans.